The chain runs to 365 residues: Eukaryotic translation initiation factor 3 subunit H (365 aa).

An MPN domain is found at valine 11–phenylalanine 160.

It belongs to the eIF-3 subunit H family. As to quaternary structure, component of the eukaryotic translation initiation factor 3 (eIF-3) complex.

Its subcellular location is the cytoplasm. Component of the eukaryotic translation initiation factor 3 (eIF-3) complex, which is involved in protein synthesis of a specialized repertoire of mRNAs and, together with other initiation factors, stimulates binding of mRNA and methionyl-tRNAi to the 40S ribosome. The eIF-3 complex specifically targets and initiates translation of a subset of mRNAs involved in cell proliferation. This is Eukaryotic translation initiation factor 3 subunit H from Aspergillus oryzae (strain ATCC 42149 / RIB 40) (Yellow koji mold).